Reading from the N-terminus, the 128-residue chain is uncharacterized protein (128 aa).

In terms of tissue distribution, high expression in pituitary gland and weak in pancreas.

This is an uncharacterized protein from Homo sapiens (Human).